A 174-amino-acid polypeptide reads, in one-letter code: Neuromedin-U (174 aa).

The first 37 residues, 1–37 (MSRAANRRPGLSAGQLAAATASPLLSLLLLLACCADA), serve as a signal peptide directing secretion. A propeptide spanning residues 38-105 (CRGTPISPQR…EQTEKDNAKR (68 aa)) is cleaved from the precursor. Met-141 is subject to Methionine sulfoxide; partial. Asn-166 carries the asparagine amide modification. Positions 170–174 (STSFI) are excised as a propeptide.

This sequence belongs to the NmU family. Expressed throughout the gastrointestinal tract with highest levels in the duodenum and jejunum. Low levels in spinal cord, hypothalamus, and stomach. Neuromedin-U-23: Expressed in the small intestine and the pituitary gland (at protein level). Neuromedin precursor-related peptides: Expressed in pituitary gland and small intestine (at protein level).

It localises to the secreted. In terms of biological role, ligand for receptors NMUR1 and NMUR2. Receptor-binding is very tight if not irreversible and triggers an increase in the cytosolic Ca(2+) concentration. Stimulates muscle contractions of specific regions of the gastrointestinal tract. In rat, NMU stimulates contractions of stomach circular muscle. Functionally, does not function as a ligand for either NMUR1 or NMUR2. Indirectly induces prolactin release although its potency is much lower than that of neuromedin precursor-related peptide 36. Does not function as a ligand for either NMUR1 or NMUR2. Indirectly induces prolactin release from lactotroph cells in the pituitary gland, probably via the hypothalamic dopaminergic system. This chain is Neuromedin-U (Nmu), found in Rattus norvegicus (Rat).